The chain runs to 528 residues: ATP synthase subunit alpha 1 (528 aa).

Glycine 177–threonine 184 contacts ATP.

It belongs to the ATPase alpha/beta chains family. As to quaternary structure, F-type ATPases have 2 components, CF(1) - the catalytic core - and CF(0) - the membrane proton channel. CF(1) has five subunits: alpha(3), beta(3), gamma(1), delta(1), epsilon(1). CF(0) has three main subunits: a(1), b(2) and c(9-12). The alpha and beta chains form an alternating ring which encloses part of the gamma chain. CF(1) is attached to CF(0) by a central stalk formed by the gamma and epsilon chains, while a peripheral stalk is formed by the delta and b chains.

It is found in the cell inner membrane. It carries out the reaction ATP + H2O + 4 H(+)(in) = ADP + phosphate + 5 H(+)(out). Produces ATP from ADP in the presence of a proton gradient across the membrane. The alpha chain is a regulatory subunit. This is ATP synthase subunit alpha 1 from Pseudoalteromonas atlantica (strain T6c / ATCC BAA-1087).